The primary structure comprises 221 residues: Oxaloacetate tautomerase FAHD1, mitochondrial (221 aa).

The N-terminal 24 residues, 1–24, are a transit peptide targeting the mitochondrion; sequence MASTKPLSRFWEWGKNIVCVGRNY. Phosphoserine is present on Ser-37. Positions 68, 70, and 99 each coordinate Mg(2+). Lys-110 bears the N6-acetyllysine mark. The residue at position 112 (Lys-112) is an N6-succinyllysine.

Belongs to the FAH family. As to quaternary structure, homodimer. Mg(2+) is required as a cofactor. Mn(2+) serves as cofactor.

The protein localises to the mitochondrion. It is found in the cytoplasm. It localises to the cytosol. It carries out the reaction oxaloacetate = enol-oxaloacetate. The catalysed reaction is oxaloacetate + H(+) = pyruvate + CO2. The enzyme catalyses a 3-acylpyruvate + H2O = a carboxylate + pyruvate + H(+). It catalyses the reaction acetylpyruvate + H2O = acetate + pyruvate + H(+). It carries out the reaction 3-fumarylpyruvate + H2O = fumarate + pyruvate + H(+). Oxaloacetate decarboxylation is competitively inhibited by oxalate. Tautomerase that converts enol-oxaloacetate, a strong inhibitor of succinate dehydrogenase, to the physiological keto form of oxaloacetate. It is thereby required to maximize aerobic respiration efficiency by preventing succinate dehydrogenase inhibition. Also acts as a weak oxaloacetate decarboxylase (ODx), catalyzing the decarboxylation of oxaloacetate (OAA) to pyruvate and CO(2), and as such is likely a regulatory enzyme in the TCA cycle. Also displays acylpyruvase activity, being able to hydrolyze acetylpyruvate and fumarylpyruvate in vitro. The sequence is that of Oxaloacetate tautomerase FAHD1, mitochondrial from Rattus norvegicus (Rat).